The primary structure comprises 483 residues: Protein nucleotidyltransferase YdiU (483 aa).

Positions 100, 102, 103, 123, 135, 136, 189, and 196 each coordinate ATP. D265 functions as the Proton acceptor in the catalytic mechanism. Mg(2+)-binding residues include N266 and D275. An ATP-binding site is contributed by D275.

It belongs to the SELO family. Mg(2+) is required as a cofactor. Requires Mn(2+) as cofactor.

The catalysed reaction is L-seryl-[protein] + ATP = 3-O-(5'-adenylyl)-L-seryl-[protein] + diphosphate. It carries out the reaction L-threonyl-[protein] + ATP = 3-O-(5'-adenylyl)-L-threonyl-[protein] + diphosphate. It catalyses the reaction L-tyrosyl-[protein] + ATP = O-(5'-adenylyl)-L-tyrosyl-[protein] + diphosphate. The enzyme catalyses L-histidyl-[protein] + UTP = N(tele)-(5'-uridylyl)-L-histidyl-[protein] + diphosphate. The catalysed reaction is L-seryl-[protein] + UTP = O-(5'-uridylyl)-L-seryl-[protein] + diphosphate. It carries out the reaction L-tyrosyl-[protein] + UTP = O-(5'-uridylyl)-L-tyrosyl-[protein] + diphosphate. Nucleotidyltransferase involved in the post-translational modification of proteins. It can catalyze the addition of adenosine monophosphate (AMP) or uridine monophosphate (UMP) to a protein, resulting in modifications known as AMPylation and UMPylation. The chain is Protein nucleotidyltransferase YdiU from Gloeobacter violaceus (strain ATCC 29082 / PCC 7421).